A 66-amino-acid polypeptide reads, in one-letter code: Protein translocase subunit SecE (66 aa).

Residues 34 to 54 traverse the membrane as a helical segment; the sequence is LVVIVAVFVFSLICLVLDYGI.

The protein belongs to the SecE/SEC61-gamma family. As to quaternary structure, component of the Sec protein translocase complex. Heterotrimer consisting of SecY, SecE and SecG subunits. The heterotrimers can form oligomers, although 1 heterotrimer is thought to be able to translocate proteins. Interacts with the ribosome. Interacts with SecDF, and other proteins may be involved. Interacts with SecA.

It localises to the cell inner membrane. In terms of biological role, essential subunit of the Sec protein translocation channel SecYEG. Clamps together the 2 halves of SecY. May contact the channel plug during translocation. This Rickettsia bellii (strain RML369-C) protein is Protein translocase subunit SecE.